The chain runs to 383 residues: BRISC and BRCA1-A complex member 2 (383 aa).

The residue at position 1 (methionine 1) is an N-acetylmethionine. A Phosphoserine modification is found at serine 2. 2 UEV-like regions span residues 30–147 (DATN…TLLE) and 275–364 (IAAF…RAKA).

Belongs to the BABAM2 family. As to quaternary structure, component of the ARISC complex, at least composed of UIMC1/RAP80, ABRAXAS1, BRCC3/BRCC36, BABAM2 and BABAM1/NBA1. Component of the BRCA1-A complex, at least composed of BRCA1, BARD1, UIMC1/RAP80, ABRAXAS1, BRCC3/BRCC36, BABAM2 and BABAM1/NBA1. In the BRCA1-A complex, interacts directly with ABRAXAS1, BRCC3/BRCC36 and BABAM1/NBA1. Binds polyubiquitin. Component of the BRISC complex, at least composed of ABRAXAS2, BRCC3/BRCC36, BABAM2 and BABAM1/NBA1. Identified in a complex with SHMT2 and the other subunits of the BRISC complex. Component of the BRCA1/BRCA2 containing complex (BRCC), which also contains BRCA1, BRCA2, BARD1, BRCC3/BRCC36 and RAD51. BRCC is a ubiquitin E3 ligase complex that enhances cellular survival following DNA damage. May interact with FAS and TNFRSF1A. As to expression, expressed in brain, heart, kidney, liver, lung, testis, germinal center B-cells and various mouse cell lines.

It localises to the cytoplasm. It is found in the nucleus. Component of the BRCA1-A complex, a complex that specifically recognizes 'Lys-63'-linked ubiquitinated histones H2A and H2AX at DNA lesions sites, leading to target the BRCA1-BARD1 heterodimer to sites of DNA damage at double-strand breaks (DSBs). The BRCA1-A complex also possesses deubiquitinase activity that specifically removes 'Lys-63'-linked ubiquitin on histones H2A and H2AX. In the BRCA1-A complex, it acts as an adapter that bridges the interaction between BABAM1/NBA1 and the rest of the complex, thereby being required for the complex integrity and modulating the E3 ubiquitin ligase activity of the BRCA1-BARD1 heterodimer. Probably also plays a role as a component of the BRISC complex, a multiprotein complex that specifically cleaves 'Lys-63'-linked ubiquitin. May regulate TNF-alpha signaling through its interactions with TNFRSF1A. Functionally, component of the BRCA1-A complex, a complex that specifically recognizes 'Lys-63'-linked ubiquitinated histones H2A and H2AX at DNA lesions sites, leading to target the BRCA1-BARD1 heterodimer to sites of DNA damage at double-strand breaks (DSBs). The BRCA1-A complex also possesses deubiquitinase activity that specifically removes 'Lys-63'-linked ubiquitin on histones H2A and H2AX. In the BRCA1-A complex, it acts as an adapter that bridges the interaction between BABAM1/NBA1 and the rest of the complex, thereby being required for the complex integrity and modulating the E3 ubiquitin ligase activity of the BRCA1-BARD1 heterodimer. Component of the BRISC complex, a multiprotein complex that specifically cleaves 'Lys-63'-linked ubiquitin in various substrates. Within the BRISC complex, acts as an adapter that bridges the interaction between BABAM1/NBA1 and the rest of the complex, thereby being required for the complex integrity. The BRISC complex is required for normal mitotic spindle assembly and microtubule attachment to kinetochores via its role in deubiquitinating NUMA1. The BRISC complex plays a role in interferon signaling via its role in the deubiquitination of the interferon receptor IFNAR1; deubiquitination increases IFNAR1 activity by enhancing its stability and cell surface expression. Down-regulates the response to bacterial lipopolysaccharide (LPS) via its role in IFNAR1 deubiquitination. May play a role in homeostasis or cellular differentiation in cells of neural, epithelial and germline origins. May also act as a death receptor-associated anti-apoptotic protein, which inhibits the mitochondrial apoptotic pathway. May regulate TNF-alpha signaling through its interactions with TNFRSF1A; however these effects may be indirect. The polypeptide is BRISC and BRCA1-A complex member 2 (Babam2) (Mus musculus (Mouse)).